We begin with the raw amino-acid sequence, 288 residues long: DegV domain-containing protein (288 aa).

The DegV domain maps to 3–282 (IAVMTDSTSY…SGGLGLGYVG (280 aa)). The hexadecanoate site is built by T62 and S95.

May bind long-chain fatty acids, such as palmitate, and may play a role in lipid transport or fatty acid metabolism. This Staphylococcus aureus protein is DegV domain-containing protein.